The primary structure comprises 316 residues: uncharacterized protein (316 aa).

Residues 16–89 (ERLDKFLARA…IPINIIYEDE (74 aa)) enclose the S4 RNA-binding domain. Aspartate 140 is an active-site residue.

The protein belongs to the pseudouridine synthase RluA family.

The catalysed reaction is a uridine in RNA = a pseudouridine in RNA. This is an uncharacterized protein from Aquifex aeolicus (strain VF5).